Reading from the N-terminus, the 175-residue chain is UPF0398 protein SSA_1858 (175 aa).

It belongs to the UPF0398 family.

This chain is UPF0398 protein SSA_1858, found in Streptococcus sanguinis (strain SK36).